Reading from the N-terminus, the 411-residue chain is SKA complex subunit 3 (411 aa).

S34, S119, S138, S154, and S158 each carry phosphoserine. Positions 102–410 are binds the NDC80 complex; it reads YQARDKEDSG…GTRGAANKEN (309 aa). A phosphothreonine mark is found at T189 and T216. A binds microtubules and contacts the microtubule-binding domain of SKA1 region spans residues 195–410; it reads PSVQVLKTPR…GTRGAANKEN (216 aa). S289 carries the phosphoserine modification. At T297 the chain carries Phosphothreonine. A phosphoserine mark is found at S324 and S352. Residues 349–410 form a required for localization to kinetochores region; the sequence is EPPSSAITSC…GTRGAANKEN (62 aa). Position 363 is a phosphothreonine (T363).

The protein belongs to the SKA3 family. Component of the SKA complex, composed of SKA1, SKA2 and SKA3. The SKA complex is a homodimer organized around a central W-shaped coiled-coil structure, formed by the interacting domains of SKA1, SKA2, and SKA3, each end of the 'W' is extended further by the C-terminal microtubule-binding domains of SKA1 and SKA3; the complex forms extended structures on microtubules. Interacts with the NDC80-NUF2 heterodimer of the NDC80 complex (via coiled coils); the interaction localizes the SKA complex to the kinetochore and is required to establish kinetochore-microtubule end-on attachments. Interacts with polo-like kinase PLK1.

The protein resides in the cytoplasm. It localises to the cytoskeleton. Its subcellular location is the spindle. The protein localises to the chromosome. It is found in the centromere. The protein resides in the kinetochore. It localises to the microtubule organizing center. Its subcellular location is the centrosome. Functionally, component of the SKA complex, a microtubule plus end-binding complex of the outer kinetochore that stabilizes spindle microtubule-kinetochore attachments, promotes alignment of chromosomes at the mitotic spindle equator (chromosome congression) and assists suppression of the spindle assembly checkpoint. Kinetochores, consisting of a centromere-associated inner segment and a microtubule-contacting outer segment, play a crucial role in chromosome segregation by mediating the physical connection between centromeric DNA and spindle microtubules. The outer kinetochore is made up of the ten-subunit KMN network complex, comprising the MIS12, NDC80 and KNL1 complexes, and auxiliary microtubule-associated components such as the SKA complex; together they connect the outer kinetochore with the inner kinetochore, bind microtubules, and mediate interactions with mitotic checkpoint proteins that delay anaphase until chromosomes are bioriented on the spindle. The SKA complex is loaded onto bioriented kinetochores and it facilitates chromosome congression by stabilizing microtubules together with MAPRE1, and end-on attachment of the NDC80 complex to depolymerizing spindle microtubules, thereby assisting the poleward-moving kinetochore in withstanding microtubule pulling forces. The complex associates with dynamic microtubule plus-ends and can track both depolymerizing and elongating microtubules. The complex recruits protein phosphatase 1 (PP1) to the kinetochore in prometaphase and metaphase, to oppose spindle assembly checkpoint signaling and promote the onset of anaphase. Within the complex, binds microtubules but with a much lower affinity than SKA1. Promotes stability of the polo-like kinase PLK1 protein. During meiosis the SKA complex stabilizes the meiotic spindle and is required for its migration to the cortex. This is SKA complex subunit 3 (Ska3) from Mus musculus (Mouse).